The following is a 259-amino-acid chain: Imidazole glycerol phosphate synthase subunit HisF (259 aa).

Residues D11 and D130 contribute to the active site.

It belongs to the HisA/HisF family. As to quaternary structure, heterodimer of HisH and HisF.

Its subcellular location is the cytoplasm. It catalyses the reaction 5-[(5-phospho-1-deoxy-D-ribulos-1-ylimino)methylamino]-1-(5-phospho-beta-D-ribosyl)imidazole-4-carboxamide + L-glutamine = D-erythro-1-(imidazol-4-yl)glycerol 3-phosphate + 5-amino-1-(5-phospho-beta-D-ribosyl)imidazole-4-carboxamide + L-glutamate + H(+). Its pathway is amino-acid biosynthesis; L-histidine biosynthesis; L-histidine from 5-phospho-alpha-D-ribose 1-diphosphate: step 5/9. Its function is as follows. IGPS catalyzes the conversion of PRFAR and glutamine to IGP, AICAR and glutamate. The HisF subunit catalyzes the cyclization activity that produces IGP and AICAR from PRFAR using the ammonia provided by the HisH subunit. The sequence is that of Imidazole glycerol phosphate synthase subunit HisF from Carboxydothermus hydrogenoformans (strain ATCC BAA-161 / DSM 6008 / Z-2901).